Reading from the N-terminus, the 230-residue chain is Ureidoacrylate amidohydrolase RutB (230 aa).

Residue Asp24 is the Proton acceptor of the active site. The active site involves Lys133. Catalysis depends on Cys166, which acts as the Nucleophile.

It belongs to the isochorismatase family. RutB subfamily.

The catalysed reaction is (Z)-3-ureidoacrylate + H2O + H(+) = (Z)-3-aminoacrylate + NH4(+) + CO2. It carries out the reaction (Z)-3-ureidoacrylate + H2O = (Z)-3-aminoacrylate + carbamate + H(+). The enzyme catalyses (Z)-2-methylureidoacrylate + H2O + H(+) = (Z)-2-methylaminoacrylate + NH4(+) + CO2. Its function is as follows. Hydrolyzes ureidoacrylate to form aminoacrylate and carbamate. The carbamate hydrolyzes spontaneously, thereby releasing one of the nitrogen atoms of the pyrimidine ring as ammonia and one of its carbon atoms as CO2. This is Ureidoacrylate amidohydrolase RutB from Escherichia coli O150:H5 (strain SE15).